The primary structure comprises 1281 residues: Angiotensin-converting enzyme (1281 aa).

The signal sequence occupies residues 1 to 17; it reads MPAALGLLLPWLSLVGA. Residues 18 to 1241 are Extracellular-facing; sequence LQPGLEPPQS…MSVGTKQATA (1224 aa). 2 Peptidase M2 domains span residues 28–610 and 629–1208; these read DPTE…LGWP and IVDE…LGWP. Residues N42, N62, N80, N99, and N148 are each glycosylated (N-linked (GlcNAc...) asparagine). An intrachain disulfide couples C145 to C151. Y217 serves as a coordination point for chloride. N-linked (GlcNAc...) asparagine glycosylation occurs at N304. C345 and C363 are joined by a disulfide. H376 is a Zn(2+) binding site. E377 functions as the Proton acceptor 1 in the catalytic mechanism. Residues H380 and E404 each coordinate Zn(2+). A glycan (N-linked (GlcNAc...) asparagine) is linked at N495. Residue H506 is the Proton donor 1 of the active site. R515 lines the chloride pocket. An intrachain disulfide couples C531 to C543. N535, N573, N601, N643, N663, and N746 each carry an N-linked (GlcNAc...) asparagine glycan. A disulfide bridge links C743 with C749. 2 residues coordinate chloride: R777 and Y815. A disulfide bridge links C943 with C961. H974 lines the Zn(2+) pocket. E975 functions as the Proton acceptor 2 in the catalytic mechanism. The Zn(2+) site is built by H978 and E1002. Chloride is bound by residues W1076 and R1080. H1104 (proton donor 2) is an active-site residue. R1113 contributes to the chloride binding site. C1129 and C1141 are disulfide-bonded. N1177 carries N-linked (GlcNAc...) asparagine glycosylation. The segment at 1201–1240 is juxtamembrane stalk; it reads NGEVLGWPEYSWTPYAVTEFHAATDTADFLGMSVGTKQAT. The helical transmembrane segment at 1242 to 1262 threads the bilayer; that stretch reads GAWVLLALALVFLITSIFLGV. Residues 1263–1281 are Cytoplasmic-facing; that stretch reads KLFSSRRKAFKSSSEMELK.

This sequence belongs to the peptidase M2 family. It depends on Zn(2+) as a cofactor. Requires chloride as cofactor.

The protein localises to the cell membrane. Its subcellular location is the cytoplasm. The enzyme catalyses Release of a C-terminal dipeptide, oligopeptide-|-Xaa-Yaa, when Xaa is not Pro, and Yaa is neither Asp nor Glu. Thus, conversion of angiotensin I to angiotensin II, with increase in vasoconstrictor activity, but no action on angiotensin II.. The catalysed reaction is angiotensin I + H2O = L-histidyl-L-leucine + angiotensin II. It catalyses the reaction bradykinin + H2O = L-Phe-L-Arg + bradykinin(1-7). It carries out the reaction substance P + H2O = substance P(1-9) + L-Leu-L-Met-NH2. The enzyme catalyses substance P + H2O = substance P(1-8) + Gly-L-Leu-L-Met-NH2. The catalysed reaction is substance P + H2O = L-Phe-L-Phe-Gly-L-Leu-L-Met-NH2 + substance P(1-6). It catalyses the reaction neurotensin + H2O = neurotensin(1-11) + L-isoleucyl-L-leucine. It carries out the reaction goralatide + H2O = N-acetyl-L-seryl-L-aspartate + L-lysyl-L-proline. The enzyme catalyses Met-enkephalin + H2O = L-phenylalanyl-L-methionine + L-tyrosylglycylglycine. The catalysed reaction is Leu-enkephalin + H2O = L-tyrosylglycylglycine + L-phenylalanyl-L-leucine. It catalyses the reaction Met-enkephalin-Arg-Phe + H2O = L-arginyl-L-phenylalanine + Met-enkephalin. Its function is as follows. Dipeptidyl carboxypeptidase that removes dipeptides from the C-terminus of a variety of circulating hormones, such as angiotensin I, bradykinin or enkephalins, thereby playing a key role in the regulation of blood pressure, electrolyte homeostasis or synaptic plasticity. Composed of two similar catalytic domains, each possessing a functional active site, with different selectivity for substrates. Plays a major role in the angiotensin-renin system that regulates blood pressure and sodium retention by the kidney by converting angiotensin I to angiotensin II, resulting in an increase of the vasoconstrictor activity of angiotensin. Also able to inactivate bradykinin, a potent vasodilator, and therefore enhance the blood pressure response. Acts as a regulator of synaptic transmission by mediating cleavage of neuropeptide hormones, such as substance P, neurotensin or enkephalins. Catalyzes degradation of different enkephalin neuropeptides (Met-enkephalin, Leu-enkephalin, Met-enkephalin-Arg-Phe and possibly Met-enkephalin-Arg-Gly-Leu). Also acts as a regulator of hematopoietic stem cell differentiation by mediating degradation of hemoregulatory peptide N-acetyl-SDKP (AcSDKP). This Gallus gallus (Chicken) protein is Angiotensin-converting enzyme.